Reading from the N-terminus, the 210-residue chain is Large ribosomal subunit protein uL3 (210 aa).

Positions 132–144 (GPMKHGSKYHRRP) are enriched in basic residues. The segment at 132–152 (GPMKHGSKYHRRPGSAGAKGP) is disordered.

The protein belongs to the universal ribosomal protein uL3 family. Part of the 50S ribosomal subunit. Forms a cluster with proteins L14 and L19.

One of the primary rRNA binding proteins, it binds directly near the 3'-end of the 23S rRNA, where it nucleates assembly of the 50S subunit. The polypeptide is Large ribosomal subunit protein uL3 (Heliobacterium modesticaldum (strain ATCC 51547 / Ice1)).